The sequence spans 232 residues: Ribonuclease 3 (232 aa).

The 126-residue stretch at 10-135 folds into the RNase III domain; that stretch reads ALKIYEATGY…LIGAMYMDGG (126 aa). Residue glutamate 48 participates in Mg(2+) binding. The active site involves aspartate 52. The Mg(2+) site is built by asparagine 121 and glutamate 124. Glutamate 124 is an active-site residue. The DRBM domain maps to 161–230; the sequence is DPKTALQEWV…AKLMLKKITE (70 aa).

This sequence belongs to the ribonuclease III family. Homodimer. Mg(2+) is required as a cofactor.

It is found in the cytoplasm. The catalysed reaction is Endonucleolytic cleavage to 5'-phosphomonoester.. Digests double-stranded RNA. Involved in the processing of primary rRNA transcript to yield the immediate precursors to the large and small rRNAs (23S and 16S). Processes some mRNAs, and tRNAs when they are encoded in the rRNA operon. Processes pre-crRNA and tracrRNA of type II CRISPR loci if present in the organism. The protein is Ribonuclease 3 of Anaplasma marginale (strain Florida).